We begin with the raw amino-acid sequence, 144 residues long: Large ribosomal subunit protein uL15 (144 aa).

The interval 24-52 (GSGLGKTAGRGHKGLKSRSGGSVRPGFEG) is disordered.

This sequence belongs to the universal ribosomal protein uL15 family. In terms of assembly, part of the 50S ribosomal subunit.

Its function is as follows. Binds to the 23S rRNA. The sequence is that of Large ribosomal subunit protein uL15 from Cellvibrio japonicus (strain Ueda107) (Pseudomonas fluorescens subsp. cellulosa).